A 238-amino-acid chain; its full sequence is Ribosomal RNA small subunit methyltransferase E 1 (238 aa).

Belongs to the RNA methyltransferase RsmE family.

The protein resides in the cytoplasm. The catalysed reaction is uridine(1498) in 16S rRNA + S-adenosyl-L-methionine = N(3)-methyluridine(1498) in 16S rRNA + S-adenosyl-L-homocysteine + H(+). Specifically methylates the N3 position of the uracil ring of uridine 1498 (m3U1498) in 16S rRNA. Acts on the fully assembled 30S ribosomal subunit. The protein is Ribosomal RNA small subunit methyltransferase E 1 (rsmE1) of Borreliella burgdorferi (strain ATCC 35210 / DSM 4680 / CIP 102532 / B31) (Borrelia burgdorferi).